Reading from the N-terminus, the 75-residue chain is uncharacterized protein (75 aa).

4Fe-4S ferredoxin-type domains are found at residues 2–30 (SHTI…KGEG) and 37–68 (DWYW…KEEP). Residues Cys10 and Cys16 each coordinate [3Fe-4S] cluster. 4 residues coordinate [4Fe-4S] cluster: Cys20, Cys46, Cys49, and Cys52. Cys56 is a [3Fe-4S] cluster binding site.

It depends on [4Fe-4S] cluster as a cofactor. [3Fe-4S] cluster serves as cofactor.

The protein localises to the plastid. It is found in the chloroplast. This is an uncharacterized protein from Porphyra purpurea (Red seaweed).